The primary structure comprises 138 residues: Basic phospholipase A2 homolog 7 (138 aa).

Positions 1 to 16 (MRTLWLMAVLLVGVEG) are cleaved as a signal peptide. Disulfide bonds link Cys-42/Cys-131, Cys-44/Cys-60, Cys-59/Cys-111, Cys-65/Cys-138, Cys-66/Cys-104, and Cys-91/Cys-102. Residues 121–133 (KKKKINLKLFCKK) are important for membrane-damaging activities in eukaryotes and bacteria; heparin-binding.

This sequence belongs to the phospholipase A2 family. Group II subfamily. K49 sub-subfamily. As to expression, expressed by the venom gland.

The protein localises to the secreted. Snake venom phospholipase A2 homolog that lacks enzymatic activity. Is myotoxic and displays edema-inducing activities. A model of myotoxic mechanism has been proposed: an apo Lys49-PLA2 is activated by the entrance of a hydrophobic molecule (e.g. fatty acid) at the hydrophobic channel of the protein leading to a reorientation of a monomer. This reorientation causes a transition between 'inactive' to 'active' states, causing alignment of C-terminal and membrane-docking sites (MDoS) side-by-side and putting the membrane-disruption sites (MDiS) in the same plane, exposed to solvent and in a symmetric position for both monomers. The MDoS region stabilizes the toxin on membrane by the interaction of charged residues with phospholipid head groups. Subsequently, the MDiS region destabilizes the membrane with penetration of hydrophobic residues. This insertion causes a disorganization of the membrane, allowing an uncontrolled influx of ions (i.e. calcium and sodium), and eventually triggering irreversible intracellular alterations and cell death. This chain is Basic phospholipase A2 homolog 7, found in Craspedocephalus gramineus (Bamboo pit viper).